A 182-amino-acid polypeptide reads, in one-letter code: MESVRRGKLMKNKKIKFDVYLNGIAYHCIKCGFCCDAPTVTKKDLAKIAGYLKIPFDEVLKRYVRFFNGYIGELKEVGGKCIFLDKKTKKCKIYKVRPLICRLRPYSVQVRNGKLTLTYDIWFLRYCRGLYLGDGKVEDEYFKYAELVLKYLGFEEGVDEEEFKRAKERLLEESLKYRKKKD.

To H.pylori HP0274.

This is an uncharacterized protein from Methanocaldococcus jannaschii (strain ATCC 43067 / DSM 2661 / JAL-1 / JCM 10045 / NBRC 100440) (Methanococcus jannaschii).